A 571-amino-acid chain; its full sequence is Proline--tRNA ligase (571 aa).

This sequence belongs to the class-II aminoacyl-tRNA synthetase family. ProS type 1 subfamily. As to quaternary structure, homodimer.

It localises to the cytoplasm. It carries out the reaction tRNA(Pro) + L-proline + ATP = L-prolyl-tRNA(Pro) + AMP + diphosphate. Its function is as follows. Catalyzes the attachment of proline to tRNA(Pro) in a two-step reaction: proline is first activated by ATP to form Pro-AMP and then transferred to the acceptor end of tRNA(Pro). As ProRS can inadvertently accommodate and process non-cognate amino acids such as alanine and cysteine, to avoid such errors it has two additional distinct editing activities against alanine. One activity is designated as 'pretransfer' editing and involves the tRNA(Pro)-independent hydrolysis of activated Ala-AMP. The other activity is designated 'posttransfer' editing and involves deacylation of mischarged Ala-tRNA(Pro). The misacylated Cys-tRNA(Pro) is not edited by ProRS. The chain is Proline--tRNA ligase from Pseudomonas putida (strain W619).